A 198-amino-acid chain; its full sequence is Armadillo repeat-containing protein 7 (198 aa).

ARM repeat units lie at residues 57 to 99 and 100 to 140; these read QVLD…QAGG and LPLI…TSLP. S169 carries the post-translational modification Phosphoserine.

In terms of assembly, component of the minor spliceosome. Within this complex, interacts with RBM48.

Functionally, as a component of the minor spliceosome, involved in the splicing of U12-type introns in pre-mRNAs. The chain is Armadillo repeat-containing protein 7 (Armc7) from Mus musculus (Mouse).